We begin with the raw amino-acid sequence, 157 residues long: Protein Smg homolog (157 aa).

Belongs to the Smg family.

The sequence is that of Protein Smg homolog from Colwellia psychrerythraea (strain 34H / ATCC BAA-681) (Vibrio psychroerythus).